Here is a 1181-residue protein sequence, read N- to C-terminus: Regulator of nonsense transcripts UPF2 (1181 aa).

2 coiled-coil regions span residues 6–41 (DESHSEKQDDEEALARLEEIKKSIEAKLTLRQNNLN) and 260–309 (HKLL…AEAL). Residues 61-264 (TAVIKKLKQI…LLQSEHKLLL (204 aa)) enclose the MIF4G 1 domain. 2 disordered regions span residues 309–348 (LDMQPPVMPEDGTTRLTAGDEASPSGTVKDTSVPEPIWDD) and 375–459 (PKSN…KEKG). The span at 375–389 (PKSNEQSAKAKEKLS) shows a compositional bias: basic and acidic residues. Over residues 398 to 412 (NQQTTEDTTEVSADS) the composition is skewed to polar residues. Basic and acidic residues predominate over residues 415-459 (MDDRSNAEQPKEKEEVEKEKAKDTKKEKGKEKDSEKKMEHEKEKG). 2 coiled-coil regions span residues 425 to 451 (KEKEEVEKEKAKDTKKEKGKEKDSEKK) and 539 to 559 (VQMLEDEFNSLVHKKDQMNIE). MIF4G domains are found at residues 469 to 655 (RLLQ…LCKP) and 672 to 871 (YVRK…NLRP). A binds to UPF3 region spans residues 735–755 (DEFVVAVVDEVLEEIRVGLEL). Residues 893 to 911 (EHASSGDKVSIERHSDTKP) show a composition bias toward basic and acidic residues. Residues 893–991 (EHASSGDKVS…GPGSDDDKFR (99 aa)) are disordered. Over residues 912–926 (SNKSSSDVISSNGKS) the composition is skewed to low complexity. Basic and acidic residues predominate over residues 927–941 (TAKDIRENGEAHGEE). Over residues 972 to 985 (GDGDDYDDGDGPGS) the composition is skewed to acidic residues. Positions 981–1181 (DGPGSDDDKF…GGGSYHARRK (201 aa)) are sufficient for interaction with UPF1 C-terminus. Interaction with UPF1 regions lie at residues 999-1023 (VDLEEQADFDQELKALLQESMEQRK) and 1066-1111 (ENGE…AELE). The necessary for interaction with UPF1 stretch occupies residues 999 to 1102 (VDLEEQADFD…PSDCALVQST (104 aa)). Residues 1000-1021 (DLEEQADFDQELKALLQESMEQ) are a coiled coil. Residues 1129–1181 (EEANGLGTQILNWTSGGSRGSTRTGEGSGKSGGSRHRFYYHQGGGGSYHARRK) are disordered. The span at 1142 to 1153 (TSGGSRGSTRTG) shows a compositional bias: low complexity.

Belongs to the RENT2 family. In terms of assembly, found in a post-splicing messenger ribonucleoprotein (mRNP) complex. Associates with the exon junction complex (EJC). Interacts with UPF1 and UPF3.

Its subcellular location is the nucleus. It is found in the nucleolus. The protein resides in the cytoplasm. The protein localises to the perinuclear region. Functionally, recruited by UPF3 associated with the EJC core at the cytoplasmic side of the nuclear envelope and the subsequent formation of an UPF1-UPF2-UPF3 surveillance complex (including UPF1 bound to release factors at the stalled ribosome) is believed to activate NMD. In cooperation with UPF3 stimulates both ATPase and RNA helicase activities of UPF1. Binds spliced mRNA. Involved in nonsense-mediated decay (NMD) of mRNAs containing premature stop codons by associating with the nuclear exon junction complex (EJC). Required for plant development and adaptation to environmental stresses, including plant defense and response to wounding. In Arabidopsis thaliana (Mouse-ear cress), this protein is Regulator of nonsense transcripts UPF2 (UPF2).